A 163-amino-acid polypeptide reads, in one-letter code: Translation initiation factor IF-3-like (163 aa).

The protein belongs to the IF-3 family.

This is Translation initiation factor IF-3-like from Nostoc sp. (strain PCC 7120 / SAG 25.82 / UTEX 2576).